Reading from the N-terminus, the 103-residue chain is uncharacterized protein (103 aa).

The first 13 residues, Met1–Ala13, serve as a signal peptide directing secretion. The N-linked (GlcNAc...) asparagine glycan is linked to Asn67. Residues Leu73 to Phe103 are disordered.

It is found in the secreted. This is an uncharacterized protein from Dictyostelium discoideum (Social amoeba).